A 421-amino-acid polypeptide reads, in one-letter code: UDP-N-acetylglucosamine 1-carboxyvinyltransferase 2 (421 aa).

22–23 (KN) contributes to the phosphoenolpyruvate binding site. R95 provides a ligand contact to UDP-N-acetyl-alpha-D-glucosamine. C119 acts as the Proton donor in catalysis. C119 carries the 2-(S-cysteinyl)pyruvic acid O-phosphothioketal modification. Residues 124 to 128 (RPIEQ), D308, and V330 each bind UDP-N-acetyl-alpha-D-glucosamine.

This sequence belongs to the EPSP synthase family. MurA subfamily.

It localises to the cytoplasm. It catalyses the reaction phosphoenolpyruvate + UDP-N-acetyl-alpha-D-glucosamine = UDP-N-acetyl-3-O-(1-carboxyvinyl)-alpha-D-glucosamine + phosphate. Its pathway is cell wall biogenesis; peptidoglycan biosynthesis. Cell wall formation. Adds enolpyruvyl to UDP-N-acetylglucosamine. This Staphylococcus saprophyticus subsp. saprophyticus (strain ATCC 15305 / DSM 20229 / NCIMB 8711 / NCTC 7292 / S-41) protein is UDP-N-acetylglucosamine 1-carboxyvinyltransferase 2.